Reading from the N-terminus, the 128-residue chain is Leucine-rich single-pass membrane protein 1 (128 aa).

The residue at position 24 (Ser-24) is a Phosphoserine. The helical transmembrane segment at 66 to 86 threads the bilayer; that stretch reads GLLLVLTVSLALVFFAIFLII. Positions 90 to 111 form a coiled coil; sequence NQMEDVSRRLTAEGKDIDDLKK.

It localises to the membrane. The chain is Leucine-rich single-pass membrane protein 1 (Lsmem1) from Mus musculus (Mouse).